Here is a 252-residue protein sequence, read N- to C-terminus: Imidazole glycerol phosphate synthase subunit HisF (252 aa).

Residues D11 and D130 contribute to the active site.

The protein belongs to the HisA/HisF family. As to quaternary structure, heterodimer of HisH and HisF.

It localises to the cytoplasm. It catalyses the reaction 5-[(5-phospho-1-deoxy-D-ribulos-1-ylimino)methylamino]-1-(5-phospho-beta-D-ribosyl)imidazole-4-carboxamide + L-glutamine = D-erythro-1-(imidazol-4-yl)glycerol 3-phosphate + 5-amino-1-(5-phospho-beta-D-ribosyl)imidazole-4-carboxamide + L-glutamate + H(+). It participates in amino-acid biosynthesis; L-histidine biosynthesis; L-histidine from 5-phospho-alpha-D-ribose 1-diphosphate: step 5/9. Functionally, IGPS catalyzes the conversion of PRFAR and glutamine to IGP, AICAR and glutamate. The HisF subunit catalyzes the cyclization activity that produces IGP and AICAR from PRFAR using the ammonia provided by the HisH subunit. This chain is Imidazole glycerol phosphate synthase subunit HisF, found in Staphylococcus epidermidis (strain ATCC 12228 / FDA PCI 1200).